A 232-amino-acid chain; its full sequence is Large ribosomal subunit protein uL1 (232 aa).

The protein belongs to the universal ribosomal protein uL1 family. Part of the 50S ribosomal subunit.

Its function is as follows. Binds directly to 23S rRNA. The L1 stalk is quite mobile in the ribosome, and is involved in E site tRNA release. In terms of biological role, protein L1 is also a translational repressor protein, it controls the translation of the L11 operon by binding to its mRNA. In Xylella fastidiosa (strain M12), this protein is Large ribosomal subunit protein uL1.